Consider the following 185-residue polypeptide: Ribosome-recycling factor (185 aa).

It belongs to the RRF family.

It localises to the cytoplasm. Functionally, responsible for the release of ribosomes from messenger RNA at the termination of protein biosynthesis. May increase the efficiency of translation by recycling ribosomes from one round of translation to another. This is Ribosome-recycling factor from Baumannia cicadellinicola subsp. Homalodisca coagulata.